A 480-amino-acid chain; its full sequence is Cytochrome b-c1 complex subunit 1, mitochondrial (480 aa).

Residues M1–S34 constitute a mitochondrion transit peptide. N6-acetyllysine is present on residues K111 and K138. Position 163 is an N6-acetyllysine; alternate (K163). The residue at position 163 (K163) is an N6-succinyllysine; alternate. S212 bears the Phosphoserine mark. K248 bears the N6-acetyllysine mark.

This sequence belongs to the peptidase M16 family. UQCRC1/QCR1 subfamily. In terms of assembly, component of the ubiquinol-cytochrome c oxidoreductase (cytochrome b-c1 complex, complex III, CIII), a multisubunit enzyme composed of 11 subunits. The complex is composed of 3 respiratory subunits cytochrome b, cytochrome c1 and Rieske protein UQCRFS1, 2 core protein subunits UQCRC1/QCR1 and UQCRC2/QCR2, and 6 low-molecular weight protein subunits UQCRH/QCR6, UQCRB/QCR7, UQCRQ/QCR8, UQCR10/QCR9, UQCR11/QCR10 and subunit 9, the cleavage product of Rieske protein UQCRFS1. The complex exists as an obligatory dimer and forms supercomplexes (SCs) in the inner mitochondrial membrane with NADH-ubiquinone oxidoreductase (complex I, CI) and cytochrome c oxidase (complex IV, CIV), resulting in different assemblies (supercomplex SCI(1)III(2)IV(1) and megacomplex MCI(2)III(2)IV(2)). Interacts with UQCC6. Interacts with STMP1. In terms of tissue distribution, expressed in brain, including substantia nigra, striatum, cortex and cerebellum, and in spinal cord, heart, kidney, liver and muscle.

The protein resides in the mitochondrion inner membrane. In terms of biological role, component of the ubiquinol-cytochrome c oxidoreductase, a multisubunit transmembrane complex that is part of the mitochondrial electron transport chain which drives oxidative phosphorylation. The respiratory chain contains 3 multisubunit complexes succinate dehydrogenase (complex II, CII), ubiquinol-cytochrome c oxidoreductase (cytochrome b-c1 complex, complex III, CIII) and cytochrome c oxidase (complex IV, CIV), that cooperate to transfer electrons derived from NADH and succinate to molecular oxygen, creating an electrochemical gradient over the inner membrane that drives transmembrane transport and the ATP synthase. The cytochrome b-c1 complex catalyzes electron transfer from ubiquinol to cytochrome c, linking this redox reaction to translocation of protons across the mitochondrial inner membrane, with protons being carried across the membrane as hydrogens on the quinol. In the process called Q cycle, 2 protons are consumed from the matrix, 4 protons are released into the intermembrane space and 2 electrons are passed to cytochrome c. The 2 core subunits UQCRC1/QCR1 and UQCRC2/QCR2 are homologous to the 2 mitochondrial-processing peptidase (MPP) subunits beta-MPP and alpha-MPP respectively, and they seem to have preserved their MPP processing properties. May be involved in the in situ processing of UQCRFS1 into the mature Rieske protein and its mitochondrial targeting sequence (MTS)/subunit 9 when incorporated into complex III. Seems to play an important role in the maintenance of proper mitochondrial function in nigral dopaminergic neurons. This is Cytochrome b-c1 complex subunit 1, mitochondrial (UQCRC1) from Homo sapiens (Human).